A 249-amino-acid chain; its full sequence is 2,3,4,5-tetrahydropyridine-2,6-dicarboxylate N-acetyltransferase (249 aa).

Belongs to the transferase hexapeptide repeat family. DapH subfamily.

The enzyme catalyses (S)-2,3,4,5-tetrahydrodipicolinate + acetyl-CoA + H2O = L-2-acetamido-6-oxoheptanedioate + CoA. The protein operates within amino-acid biosynthesis; L-lysine biosynthesis via DAP pathway; LL-2,6-diaminopimelate from (S)-tetrahydrodipicolinate (acetylase route): step 1/3. Its function is as follows. Catalyzes the transfer of an acetyl group from acetyl-CoA to tetrahydrodipicolinate. This is 2,3,4,5-tetrahydropyridine-2,6-dicarboxylate N-acetyltransferase from Fervidobacterium nodosum (strain ATCC 35602 / DSM 5306 / Rt17-B1).